We begin with the raw amino-acid sequence, 527 residues long: Bifunctional purine biosynthesis protein PurH (527 aa).

One can recognise an MGS-like domain in the interval 1 to 149 (MASDFLPVHR…KNFARVAVAT (149 aa)).

This sequence belongs to the PurH family.

The enzyme catalyses (6R)-10-formyltetrahydrofolate + 5-amino-1-(5-phospho-beta-D-ribosyl)imidazole-4-carboxamide = 5-formamido-1-(5-phospho-D-ribosyl)imidazole-4-carboxamide + (6S)-5,6,7,8-tetrahydrofolate. It carries out the reaction IMP + H2O = 5-formamido-1-(5-phospho-D-ribosyl)imidazole-4-carboxamide. Its pathway is purine metabolism; IMP biosynthesis via de novo pathway; 5-formamido-1-(5-phospho-D-ribosyl)imidazole-4-carboxamide from 5-amino-1-(5-phospho-D-ribosyl)imidazole-4-carboxamide (10-formyl THF route): step 1/1. The protein operates within purine metabolism; IMP biosynthesis via de novo pathway; IMP from 5-formamido-1-(5-phospho-D-ribosyl)imidazole-4-carboxamide: step 1/1. This Xylella fastidiosa (strain 9a5c) protein is Bifunctional purine biosynthesis protein PurH.